Reading from the N-terminus, the 341-residue chain is Anthranilate phosphoribosyltransferase (341 aa).

5-phospho-alpha-D-ribose 1-diphosphate is bound by residues Gly-83, Ser-91, 93–96 (NTST), 111–115 (KHGNR), and Ser-123. Gly-83 provides a ligand contact to anthranilate. Mg(2+) is bound at residue Ser-95. Residue Asn-114 coordinates anthranilate. Arg-169 contributes to the anthranilate binding site. Mg(2+) contacts are provided by Asp-228 and Glu-229.

It belongs to the anthranilate phosphoribosyltransferase family. As to quaternary structure, homodimer. Requires Mg(2+) as cofactor.

The enzyme catalyses N-(5-phospho-beta-D-ribosyl)anthranilate + diphosphate = 5-phospho-alpha-D-ribose 1-diphosphate + anthranilate. It participates in amino-acid biosynthesis; L-tryptophan biosynthesis; L-tryptophan from chorismate: step 2/5. In terms of biological role, catalyzes the transfer of the phosphoribosyl group of 5-phosphorylribose-1-pyrophosphate (PRPP) to anthranilate to yield N-(5'-phosphoribosyl)-anthranilate (PRA). The sequence is that of Anthranilate phosphoribosyltransferase from Hyphomonas neptunium (strain ATCC 15444).